We begin with the raw amino-acid sequence, 147 residues long: Large ribosomal subunit protein uL22c (147 aa).

This sequence belongs to the universal ribosomal protein uL22 family. Part of the 50S ribosomal subunit.

It localises to the plastid. This protein binds specifically to 23S rRNA. Functionally, the globular domain of the protein is located near the polypeptide exit tunnel on the outside of the subunit, while an extended beta-hairpin is found that lines the wall of the exit tunnel in the center of the 70S ribosome. This is Large ribosomal subunit protein uL22c (rpl22) from Cuscuta obtusiflora (Peruvian dodder).